The primary structure comprises 104 residues: PTS system lactose-specific EIIA component (104 aa).

The region spanning 1–102 (MNRDEVQLLG…MKHLIELYKK (102 aa)) is the PTS EIIA type-3 domain. His-78 (tele-phosphohistidine intermediate) is an active-site residue. His-78 bears the Phosphohistidine; by HPr mark. Mg(2+) is bound at residue Asp-81.

In terms of assembly, homotrimer. It depends on Mg(2+) as a cofactor.

Its subcellular location is the cytoplasm. Functionally, the phosphoenolpyruvate-dependent sugar phosphotransferase system (sugar PTS), a major carbohydrate active transport system, catalyzes the phosphorylation of incoming sugar substrates concomitantly with their translocation across the cell membrane. The enzyme II LacEF PTS system is involved in lactose transport. This is PTS system lactose-specific EIIA component from Staphylococcus epidermidis (strain ATCC 35984 / DSM 28319 / BCRC 17069 / CCUG 31568 / BM 3577 / RP62A).